A 753-amino-acid chain; its full sequence is Probable TonB-dependent siderophore receptor PiuA (753 aa).

Residues 1–35 (MSRQSTDTAVSSQRLLASAIGVAITAIAAPQAAQA) form the signal peptide. The 107-residue stretch at 79–185 (PLLDTPKTVT…TGGSLNLISK (107 aa)) folds into the TBDR plug domain. One can recognise a TBDR beta-barrel domain in the interval 190 to 753 (DNFTDAGFTW…TALLGVNFHF (564 aa)). Cys-420 and Cys-430 are disulfide-bonded.

It belongs to the TonB-dependent receptor family.

Its subcellular location is the cell outer membrane. Functionally, involved in the initial step of iron uptake by binding iron chelating siderophores, thereby allowing extraction of iron from the environment. Probably involved in the transport of siderophores, including host catecholamines such as dopamine. This is Probable TonB-dependent siderophore receptor PiuA from Pseudomonas aeruginosa (strain ATCC 15692 / DSM 22644 / CIP 104116 / JCM 14847 / LMG 12228 / 1C / PRS 101 / PAO1).